We begin with the raw amino-acid sequence, 330 residues long: tRNA N6-adenosine threonylcarbamoyltransferase (330 aa).

The Fe cation site is built by H110 and H114. Substrate contacts are provided by residues 133–137 (LVSGG), D166, G179, and N268. Residue D296 coordinates Fe cation.

The protein belongs to the KAE1 / TsaD family. Requires Fe(2+) as cofactor.

The protein resides in the cytoplasm. The catalysed reaction is L-threonylcarbamoyladenylate + adenosine(37) in tRNA = N(6)-L-threonylcarbamoyladenosine(37) in tRNA + AMP + H(+). Functionally, required for the formation of a threonylcarbamoyl group on adenosine at position 37 (t(6)A37) in tRNAs that read codons beginning with adenine. Is involved in the transfer of the threonylcarbamoyl moiety of threonylcarbamoyl-AMP (TC-AMP) to the N6 group of A37, together with TsaE and TsaB. TsaD likely plays a direct catalytic role in this reaction. The chain is tRNA N6-adenosine threonylcarbamoyltransferase from Kosmotoga olearia (strain ATCC BAA-1733 / DSM 21960 / TBF 19.5.1).